We begin with the raw amino-acid sequence, 819 residues long: MKKVFFLILILNCVVGALSNKNICKISLLLSGDYNDIGVNYMFNYARTQVEKNLNINSIVFTNLENNQNAINNAIIESINKGSNFLISTINSHSNFIINYSRLYKNKEIFWLIKGNDNERPIPDDLPRVKILNINSDLSFYYLGFISSLISKTGKIGFISTKNIETDYQRLTNAFYIGAINSNPNITFLVCSNNFNNQNNNKKISYKISKLLISKGVDFIGSDQDDNSIQLAVIDNGGIGLGLTGFEYSKIYNDKFPFSFKLEWSQLLIDITNTIINGSWVDYDIIYITSFSRLNGTTNFTPEIEPIINYNFIPKIYQKQINDEINKLKNHSTNYYFPHLCNNLFNNIYNQKQTNGCITNEQFSNSHLLNASNIKIIDNKEILEFVDSYSNSIKISILSVSIFCIFICVLGMIFITVLRNARILKSSSPSFLLLILFGCIVIFTGCILFSQPATDKTCQGRVWLLSIGYTIFLGSLLIKNWRVWLLFDNKKLRKRSITNWKLYPWVAGILVVDVLILALWQGLGDIKSESRIIGTSFYQYTNVCTNNDQGSIALYILLAFHGLKLLGTCFISFKIKLVDIEEFNESKPITTSVFIILFCIFTIILLIAPSSSSSSASSPQPIASLETIICICSVTTTAISIGLLFGDKIYFITTQGLGLNQTFAKSSSFSLDKKDCDDDDDDSSDGSDHSNSNKNKNKNKNRNQSEKKKRPNSIKPIGLFSKSKQESVVFNPPSNNDLTNELALPIEGIKEGHGHDSENNDEYEHHEDEDHEYEGEGEDEDHEDEYEVENDIEQEQEQESSNISISTKKNNENEIISDT.

The N-terminal stretch at 1-19 is a signal peptide; it reads MKKVFFLILILNCVVGALS. The Extracellular segment spans residues 20 to 394; that stretch reads NKNICKISLL…FVDSYSNSIK (375 aa). N-linked (GlcNAc...) asparagine glycans are attached at residues asparagine 99, asparagine 185, asparagine 277, asparagine 295, asparagine 330, and asparagine 370. A helical transmembrane segment spans residues 395 to 415; the sequence is ISILSVSIFCIFICVLGMIFI. Residues 416-428 lie on the Cytoplasmic side of the membrane; it reads TVLRNARILKSSS. The helical transmembrane segment at 429 to 449 threads the bilayer; the sequence is PSFLLLILFGCIVIFTGCILF. Residues 450–457 are Extracellular-facing; sequence SQPATDKT. A helical membrane pass occupies residues 458-478; that stretch reads CQGRVWLLSIGYTIFLGSLLI. The Cytoplasmic portion of the chain corresponds to 479-503; it reads KNWRVWLLFDNKKLRKRSITNWKLY. Residues 504 to 524 form a helical membrane-spanning segment; the sequence is PWVAGILVVDVLILALWQGLG. At 525–550 the chain is on the extracellular side; sequence DIKSESRIIGTSFYQYTNVCTNNDQG. Residues 551–571 form a helical membrane-spanning segment; sequence SIALYILLAFHGLKLLGTCFI. Residues 572 to 587 are Cytoplasmic-facing; sequence SFKIKLVDIEEFNESK. A helical transmembrane segment spans residues 588–608; that stretch reads PITTSVFIILFCIFTIILLIA. The Extracellular portion of the chain corresponds to 609–624; the sequence is PSSSSSSASSPQPIAS. The chain crosses the membrane as a helical span at residues 625 to 645; that stretch reads LETIICICSVTTTAISIGLLF. The Cytoplasmic portion of the chain corresponds to 646–819; the sequence is GDKIYFITTQ…NNENEIISDT (174 aa). The disordered stretch occupies residues 674-819; sequence KDCDDDDDDS…NNENEIISDT (146 aa). Residues 695 to 712 show a composition bias toward basic residues; the sequence is NKNKNKNRNQSEKKKRPN. Residues 726 to 739 are compositionally biased toward polar residues; it reads ESVVFNPPSNNDLT. The span at 748–768 shows a compositional bias: basic and acidic residues; sequence GIKEGHGHDSENNDEYEHHED. Residues 769-798 are compositionally biased toward acidic residues; the sequence is EDHEYEGEGEDEDHEDEYEVENDIEQEQEQ. Positions 799-808 are enriched in low complexity; sequence ESSNISISTK.

This sequence in the N-terminal section; belongs to the BMP lipoprotein family. It in the C-terminal section; belongs to the G-protein coupled receptor 3 family. GABA-B receptor subfamily.

Its subcellular location is the membrane. This is Metabotropic glutamate receptor-like protein O (grlO) from Dictyostelium discoideum (Social amoeba).